Reading from the N-terminus, the 113-residue chain is Large ribosomal subunit protein bL17 (113 aa).

The protein belongs to the bacterial ribosomal protein bL17 family. As to quaternary structure, part of the 50S ribosomal subunit. Contacts protein L32.

The protein is Large ribosomal subunit protein bL17 of Clostridium novyi (strain NT).